Consider the following 336-residue polypeptide: Glyoxylate reductase (336 aa).

NADP(+) contacts are provided by residues 158–161 (FGRI), 180–182 (SRT), and 239–241 (IAR). Residues Arg241 and Glu270 contribute to the active site. His288 serves as the catalytic Proton donor. 288-290 (HIG) serves as a coordination point for NADP(+).

It belongs to the D-isomer specific 2-hydroxyacid dehydrogenase family. GyaR subfamily. Homodimer.

It localises to the cytoplasm. The catalysed reaction is glycolate + NAD(+) = glyoxylate + NADH + H(+). In Pyrococcus furiosus (strain ATCC 43587 / DSM 3638 / JCM 8422 / Vc1), this protein is Glyoxylate reductase.